The sequence spans 365 residues: 2-aminoethylphosphonate--pyruvate transaminase (365 aa).

Lysine 194 is modified (N6-(pyridoxal phosphate)lysine).

It belongs to the class-V pyridoxal-phosphate-dependent aminotransferase family. PhnW subfamily. In terms of assembly, homodimer. Pyridoxal 5'-phosphate is required as a cofactor.

The catalysed reaction is (2-aminoethyl)phosphonate + pyruvate = phosphonoacetaldehyde + L-alanine. In terms of biological role, involved in phosphonate degradation. The polypeptide is 2-aminoethylphosphonate--pyruvate transaminase (Bacillus cereus (strain AH187)).